A 551-amino-acid polypeptide reads, in one-letter code: Probable NADH-ubiquinone oxidoreductase C3A11.07, mitochondrial (551 aa).

A mitochondrion-targeting transit peptide spans 1-37 (MLFSRSILRGMPKAGIPKSPLALSASRNLRLANSVRF). Residue 93 to 123 (TLVVLGAGWGATSILRTIDTSLFNVIVVSPR) participates in FAD binding. NAD(+) is bound at residue 255 to 291 (VHTVVVGGGPTGMEFAGEMADFIEDDLKSWYPELADD).

It belongs to the NADH dehydrogenase family.

It is found in the mitochondrion. The enzyme catalyses a quinone + NADH + H(+) = a quinol + NAD(+). It carries out the reaction a ubiquinone + NADH + H(+) = a ubiquinol + NAD(+). Functionally, catalyzes the oxidation of NADH. This is Probable NADH-ubiquinone oxidoreductase C3A11.07, mitochondrial from Schizosaccharomyces pombe (strain 972 / ATCC 24843) (Fission yeast).